The sequence spans 250 residues: 5'-nucleotidase SurE (250 aa).

4 residues coordinate a divalent metal cation: D8, D9, S39, and N91.

Belongs to the SurE nucleotidase family. A divalent metal cation serves as cofactor.

Its subcellular location is the cytoplasm. The catalysed reaction is a ribonucleoside 5'-phosphate + H2O = a ribonucleoside + phosphate. Functionally, nucleotidase that shows phosphatase activity on nucleoside 5'-monophosphates. The polypeptide is 5'-nucleotidase SurE (Shewanella halifaxensis (strain HAW-EB4)).